A 323-amino-acid chain; its full sequence is Calcium homeostasis modulator protein 2 (323 aa).

Residues 1-21 (MAALIAENFRFLSLFFKSKDV) are Cytoplasmic-facing. Residues 14 to 39 (LFFKSKDVMIFNGLVALGTVGSQELF) are central pore. The helical transmembrane segment at 22 to 43 (MIFNGLVALGTVGSQELFSVVA) threads the bilayer. Residues 44–52 (FHCPCSPAR) are Extracellular-facing. 2 disulfides stabilise this stretch: Cys46-Cys130 and Cys48-Cys162. The helical transmembrane segment at 53-76 (NYLYGLTAIGVPALALFLIGVILN) threads the bilayer. Over 77–101 (NHTWNLVAECQYRRAKNCSAAPNFL) the chain is Cytoplasmic. Residues 102–132 (LLSSILGRAAVAPVTWSVISLLRGEAYVCAL) form a helical membrane-spanning segment. Residues 133–179 (SEFVDPSSLTAGDKGFPPAHATEVLARFPCGEGPANLSSFREEVSRR) lie on the Extracellular side of the membrane. A hemichannel docking region spans residues 145–152 (DKGFPPAH). The helical transmembrane segment at 180-206 (LKYESQLFGWLLIGVVAILVFLTKCLK) threads the bilayer. At 207–323 (HYCSPLSYRQ…DNVEMALLTA (117 aa)) the chain is on the cytoplasmic side. The tract at residues 214–251 (YRQEAYWAQYRTNEDQLFQRTAEVHSRVLAANNVRRFF) is intersubunit interaction.

It belongs to the CALHM family. In terms of assembly, homo-undecamer. Two undecameric hemichannels can assemble in a head-to-head manner to form a gap junction. As to expression, neuron, astrocyte, and microglia.

The protein localises to the cell membrane. The enzyme catalyses ATP(in) = ATP(out). Its activity is regulated as follows. Inhibited by divalent cations such as Co(2+) and Ni(2+). Its function is as follows. Pore-forming subunit of Ca(2+) homeostasis modulator channels. Mediates ATP release from astrocytes and ATP-induced Ca(2+) influx in microglia thus regulating neuronal ATP and Ca(2+) homeostasis, synaptic transmission and neuroinflammatory response. May form intercellular gap junctions. The gating mechanism remains unknown. The protein is Calcium homeostasis modulator protein 2 of Mus musculus (Mouse).